Here is a 3011-residue protein sequence, read N- to C-terminus: Genome polyprotein (3011 aa).

Ser2 is subject to N-acetylserine; by host. The segment at 2–23 is interaction with STAT1; the sequence is STNPKPQRKTKRNTNRRPQDVK. The interaction with EIF2AK2/PKR stretch occupies residues 2 to 58; sequence STNPKPQRKTKRNTNRRPQDVKFPGGGQIVGGVYLLPRRGPRLGVRATRKTSERSQP. The interval 2-59 is interaction with DDX3X; that stretch reads STNPKPQRKTKRNTNRRPQDVKFPGGGQIVGGVYLLPRRGPRLGVRATRKTSERSQPR. The disordered stretch occupies residues 2–75; that stretch reads STNPKPQRKT…PKARRPEGRT (74 aa). The Cytoplasmic segment spans residues 2 to 168; that stretch reads STNPKPQRKT…EDGVNYATGN (167 aa). 2 short sequence motifs (nuclear localization signal) span residues 5-13 and 38-43; these read PKPQRKTKR and PRRGPR. A compositionally biased stretch (basic residues) spans 7-16; sequence PQRKTKRNTN. Positions 32–47 are enriched in low complexity; it reads GGVYLLPRRGPRLGVR. At Ser53 the chain carries Phosphoserine; by host. Short sequence motifs (nuclear localization signal) lie at residues 58-64 and 66-71; these read PRGRRQP and PKARRP. Positions 58–68 are enriched in basic residues; that stretch reads PRGRRQPIPKA. A Phosphoserine; by host modification is found at Ser99. The segment at 112-152 is important for endoplasmic reticulum and mitochondrial localization; it reads PRRRSRNLGKVIDTLTCGFADLMGYIPLVGAPLGGAARALA. At Ser116 the chain carries Phosphoserine; by host PKA. The interaction with APOA2 stretch occupies residues 122-173; that stretch reads VIDTLTCGFADLMGYIPLVGAPLGGAARALAHGVRVLEDGVNYATGNLPGCS. Residues 164-167 form an important for lipid droplets localization region; that stretch reads YATG. A helical transmembrane segment spans residues 169-189; that stretch reads LPGCSFSIFLLALLSCLTVPA. Residues 178–191 constitute a propeptide, ER anchor for the core protein, removed in mature form by host signal peptidase; the sequence is LLALLSCLTVPASA. The Lumenal segment spans residues 190–358; it reads SAYQVRNSSG…AGAHWGVLAG (169 aa). 3 N-linked (GlcNAc...) asparagine; by host glycosylation sites follow: Asn196, Asn209, and Asn234. The interval 265 to 296 is important for fusion; the sequence is LVGSATLCSALYVGDLCGSVFLVGQLFTFSPR. The N-linked (GlcNAc...) asparagine; by host glycan is linked to Asn305. The chain crosses the membrane as a helical span at residues 359 to 379; sequence IKYFSMVGNWAKVLVVLLLFA. Over 380-725 the chain is Lumenal; that stretch reads GVDAETHVTG…WEYVVLLFLL (346 aa). Residues 385 to 411 are HVR1; the sequence is THVTGGNAGRTTAGLVGLLTPGAKQNI. Asn417, Asn423, Asn430, and Asn448 each carry an N-linked (GlcNAc...) (high mannose) asparagine; by host glycan. 4 disulfides stabilise this stretch: Cys429-Cys552, Cys452-Cys459, Cys486-Cys494, and Cys503-Cys508. The segment at 474 to 479 is HVR2; that stretch reads YANGSG. Asn476 carries an N-linked (GlcNAc...) (high mannose) asparagine; by host glycan. A CD81-binding 1 region spans residues 480–493; sequence LDERPYCWHYPPRP. Residues Asn532 and Asn540 are each glycosylated (N-linked (GlcNAc...) (high mannose) asparagine; by host). The tract at residues 544 to 551 is CD81-binding 2; that stretch reads PPLGNWFG. N-linked (GlcNAc...) (high mannose) asparagine; by host glycosylation is present at Asn556. Cysteines 564 and 569 form a disulfide. A glycan (N-linked (GlcNAc...) (high mannose) asparagine; by host) is linked at Asn576. Intrachain disulfides connect Cys581-Cys585, Cys597-Cys620, and Cys607-Cys644. 2 N-linked (GlcNAc...) (high mannose) asparagine; by host glycosylation sites follow: Asn623 and Asn645. A disulfide bond links Cys652 and Cys677. An EIF2AK2/eIF2-alpha phosphorylation homology domain (PePHD) region spans residues 660–671; sequence SELSPLLLSTTQ. The helical transmembrane segment at 726–746 threads the bilayer; the sequence is LADARVCSCLWMMLLISQAEA. At 747 to 757 the chain is on the lumenal side; that stretch reads ALENLVILNAA. The helical transmembrane segment at 758–778 threads the bilayer; it reads SLAGTHGLVSFLVFFCFAWYL. At 779–781 the chain is on the cytoplasmic side; sequence KGR. A helical membrane pass occupies residues 782–803; it reads WVPGAVYALYGMWPLLLLLLAL. The Lumenal portion of the chain corresponds to 804-813; that stretch reads PQRAYALDTE. A helical membrane pass occupies residues 814 to 834; the sequence is VAASCGGVVLVGLMALTLSPY. Over 835–838 the chain is Cytoplasmic; it reads YKRY. Residues 839-859 traverse the membrane as a helical segment; the sequence is ISWCMWWLQYFLTRVEAQLHV. The Lumenal segment spans residues 860 to 881; it reads WVPPLNVRGGRDAVILLTCVVH. Residues 882 to 902 form a helical membrane-spanning segment; it reads PALVFDITKLLLAIFGPLWIL. Positions 899–1026 constitute a Peptidase C18 domain; sequence LWILQASLLK…GMVSKGWRLL (128 aa). Topologically, residues 903-1657 are cytoplasmic; that stretch reads QASLLKVPYF…CMSADLEVVT (755 aa). Residues 904 to 1206 form a protease NS2-3 region; the sequence is ASLLKVPYFV…PVENLETTMR (303 aa). Cys922 carries the S-palmitoyl cysteine; by host lipid modification. The interaction with host SCPS1 stretch occupies residues 929 to 949; sequence AGGHYVQMAIIKLGALTGTCV. Active-site for protease NS2 activity; shared with dimeric partner residues include His952, Glu972, and Cys993. The region spanning 1027–1208 is the Peptidase S29 domain; it reads APITAYAQQT…ENLETTMRSP (182 aa). Catalysis depends on charge relay system; for serine protease NS3 activity residues His1083 and Asp1107. Zn(2+) contacts are provided by Cys1123 and Cys1125. The active-site Charge relay system; for serine protease NS3 activity is Ser1165. The Zn(2+) site is built by Cys1171 and His1175. One can recognise a Helicase ATP-binding domain in the interval 1217–1369; it reads PAVPQSFQVA…PNIEEVALST (153 aa). 1230–1237 provides a ligand contact to ATP; that stretch reads APTGSGKS. The Mg(2+) site is built by Ser1237 and Glu1317. The DECH box motif lies at 1316-1319; it reads DECH. An RNA-binding region spans residues 1486–1497; the sequence is QRRGRTGRGKPG. The chain crosses the membrane as a helical span at residues 1658–1678; the sequence is STWVLVGGVLAALAAYCLSTG. The tract at residues 1679–1690 is NS3-binding; sequence CVVIVGRIVLSG. Residues 1679–1805 are Cytoplasmic-facing; that stretch reads CVVIVGRIVL…AVTSPLTTGQ (127 aa). A helical transmembrane segment spans residues 1806 to 1824; that stretch reads TLLFNILGGWVAAQLAAPG. At 1825–1828 the chain is on the lumenal side; sequence AATA. A helical membrane pass occupies residues 1829–1849; that stretch reads FVGAGLAGAALDSVGLGKVLV. The interval 1833–1861 is glycine zipper; that stretch reads GLAGAALDSVGLGKVLVDILAGYGAGVAG. Asp1850 is a topological domain (cytoplasmic). The chain crosses the membrane as a helical span at residues 1851 to 1871; the sequence is ILAGYGAGVAGALVAFKIMSG. Residues 1872–1881 lie on the Lumenal side of the membrane; it reads EVPSTEDLVN. The helical transmembrane segment at 1882–1902 threads the bilayer; sequence LLPAILSPGALAVGVVFASIL. Residues 1903 to 1972 lie on the Cytoplasmic side of the membrane; the sequence is RRRVGPGEGA…WISSECTTPC (70 aa). Cys1968 carries S-palmitoyl cysteine; by host lipidation. Cys1972 carries the S-palmitoyl cysteine; by host; partial lipid modification. An intramembrane segment occupies 1973 to 2003; it reads SGSWLRDIWDWICEVLSDFKTWLKAKLMPQL. The segment at 1978-1998 is membrane-binding; sequence RDIWDWICEVLSDFKTWLKAK. At 2004–2990 the chain is on the cytoplasmic side; that stretch reads PGIPFVSCQR…YHSVSHARPR (987 aa). A D1; RNA-binding region spans residues 2005 to 2221; it reads GIPFVSCQRG…KATCTANHDS (217 aa). Positions 2011, 2029, 2031, and 2052 each coordinate Zn(2+). The tract at residues 2120–2208 is FKBP8-binding; that stretch reads EFFTELDGVR…ASSSASQLSA (89 aa). Residues 2120 to 2332 are transcriptional activation; sequence EFFTELDGVR…PVPPPRKKRT (213 aa). The interval 2135 to 2139 is interaction with non-structural protein 4A; the sequence is PPCKP. The tract at residues 2189-2441 is interaction with host SKP2; that stretch reads RLARGSPPSM…TPCAAEEQKL (253 aa). Ser2194 carries the phosphoserine; by host; in p56 modification. Ser2197 carries the phosphoserine; by host; in p58 modification. Ser2201 carries the post-translational modification Phosphoserine; by host; in p56 and p58, regulates intracellular NS5A distribution. Ser2204, Ser2207, and Ser2210 each carry phosphoserine; by host; in p58. Positions 2210-2249 are ISDR; the sequence is SLKATCTANHDSPDAELIEANLLWRQEMGGNITRVESENK. The segment at 2210 to 2275 is interaction with EIF2AK2/PKR; that stretch reads SLKATCTANH…REVSVPAEIL (66 aa). Residues 2223–2315 form a D2 region; sequence DAELIEANLL…YEPPVVHGCP (93 aa). The interval 2224 to 2315 is disordered; sequence AELIEANLLW…YEPPVVHGCP (92 aa). The interval 2249 to 2306 is NS4B-binding; sequence KVVILDSFDPLVAEEDEREVSVPAEILRKSRRFAPALPVWARPDYNPLLVETWKKPDY. An interaction with human PPIA/CYPA region spans residues 2281–2297; sequence FAPALPVWARPDYNPLL. Over residues 2315 to 2326 the composition is skewed to pro residues; sequence PLPPPRSPPVPP. Ser2321 is modified (phosphoserine; by host). Positions 2322–2325 match the SH3-binding motif; it reads PPVP. Residues 2326–2334 carry the Nuclear localization signal motif; sequence PPRKKRTVV. The interval 2329 to 2420 is D3; that stretch reads KKRTVVLTES…GADTEDVVCC (92 aa). Residues 2332-2441 form an interaction with host IFI27 region; it reads TVVLTESTLP…TPCAAEEQKL (110 aa). Residues 2346 to 2409 are disordered; that stretch reads ELATKSFGSS…LSDGSWSTVS (64 aa). The segment covering 2349–2369 has biased composition (low complexity); sequence TKSFGSSSTSGITGDNTTTSS. Lys2350 participates in a covalent cross-link: Glycyl lysine isopeptide (Lys-Gly) (interchain with G-Cter in ubiquitin). Residues 2354–2377 form a V3 region; it reads SSSTSGITGDNTTTSSEPAPSGCP. Positions 2367-2417 are interaction with host VAPB; that stretch reads TSSEPAPSGCPPDSDVESYSSMPPLEGEPGDPDLSDGSWSTVSSGADTEDV. Phosphoserine; by host is present on residues Ser2449 and Ser2462. The region spanning 2634–2752 is the RdRp catalytic domain; it reads PMGLSYDTRC…ICESAGVQED (119 aa). Mg(2+)-binding residues include Asp2640, Asp2738, and Asp2739. A helical membrane pass occupies residues 2991–3011; it reads WFWFCLLLLAAGVGIYLLPNR.

This sequence belongs to the hepacivirus polyprotein family. As to quaternary structure, homooligomer. Interacts with E1 (via C-terminus). Interacts with the non-structural protein 5A. Interacts (via N-terminus) with host STAT1 (via SH2 domain); this interaction results in decreased STAT1 phosphorylation and ubiquitin-mediated proteasome-dependent STAT1 degradation, leading to decreased IFN-stimulated gene transcription. Interacts with host STAT3; this interaction constitutively activates STAT3. Associates with host LTBR receptor. Interacts with host TNFRSF1A receptor and possibly induces apoptosis. Interacts with host HNRPK. Interacts with host YWHAE. Interacts with host UBE3A/E6AP. Interacts with host DDX3X. Interacts with host APOA2. Interacts with host RXRA protein. Interacts with host SP110 isoform 3/Sp110b; this interaction sequesters the transcriptional corepressor SP110 away from the nucleus. Interacts with host CREB3 nuclear transcription protein; this interaction triggers cell transformation. Interacts with host ACY3. Interacts with host C1QR1. Interacts with host RBM24; this interaction, which enhances the interaction of the mature core protein with 5'-UTR, may inhibit viral translation and favor replication. Interacts (via N-terminus) with host EIF2AK2/PKR (via N-terminus); this interaction induces the autophosphorylation of EIF2AK2. Part of the viral assembly initiation complex composed of NS2, E1, E2, NS3, NS4A, NS5A and the mature core protein. In terms of assembly, forms a heterodimer with envelope glycoprotein E2. Interacts with mature core protein. Interacts with protease NS2. The heterodimer E1/E2 interacts with host CLDN1; this interaction plays a role in viral entry into host cell. Interacts with host SPSB2 (via C-terminus). Part of the viral assembly initiation complex composed of NS2, E1, E2, NS3, NS4A, NS5A and the mature core protein. Interacts with host NEURL3; this interaction prevents E1 binding to glycoprotein E2. Forms a heterodimer with envelope glycoprotein E1. Interacts with host CD81 and SCARB1 receptors; these interactions play a role in viral entry into host cell. Interacts with host EIF2AK2/PKR; this interaction inhibits EIF2AK2 and probably allows the virus to evade the innate immune response. Interacts with host CD209/DC-SIGN and CLEC4M/DC-SIGNR. Interact with host SPCS1; this interaction is essential for viral particle assembly. Interacts with protease NS2. The heterodimer E1/E2 interacts with host CLDN1; this interaction plays a role in viral entry into host cell. Part of the viral assembly initiation complex composed of NS2, E1, E2, NS3, NS4A, NS5A and the mature core protein. Interacts with host SLC3A2/4F2hc; the interaction may facilitate viral entry into host cell. Interacts with human PLSCR1. As to quaternary structure, homohexamer. Homoheptamer. Interacts with protease NS2. In terms of assembly, homodimer. Interacts with host SPCS1; this interaction is essential for viral particle assembly. Interacts with envelope glycoprotein E1. Interacts with envelope glycoprotein E2. Interacts with viroporin p7. Interacts with serine protease/helicase NS3. Part of the replication complex composed of NS2, NS3, NS4A, NS4B, NS5A and the RNA-directed RNA polymerase embedded in an ER-derived membranous web. Part of the viral assembly initiation complex composed of NS2, E1, E2, NS3, NS4A, NS5A and the mature core protein. Interacts with protease NS2. Interacts with non-structural protein 4A; this interaction stabilizes the folding of NS3 serine protease. NS3-NS4A interaction is essential for NS3 activation and allows membrane anchorage of the latter. NS3/NS4A complex also prevents phosphorylation of host IRF3, thus preventing the establishment of dsRNA induced antiviral state. Interacts with host MAVS; this interaction leads to the cleavage and inhibition of host MAVS. Interacts with host TICAM1; this interaction leads to the cleavage and inhibition of host TICAM1. Interacts with host TANK-binding kinase/TBK1; this interaction results in the inhibition of the association between TBK1 and IRF3, which leads to the inhibition of IRF3 activation. Interacts with host RBM24. Part of the replication complex composed of NS2, NS3, NS4A, NS4B, NS5A and the RNA-directed RNA polymerase embedded in an ER-derived membranous web. Part of the viral assembly initiation complex composed of NS2, E1, E2, NS3, NS4A, NS5A and the mature core protein. As to quaternary structure, interacts with NS3 serine protease; this interaction stabilizes the folding of NS3 serine protease. NS3-NS4A interaction is essential for NS3 activation and allows membrane anchorage of the latter. Interacts with non-structural protein 5A (via N-terminus). Part of the replication complex composed of NS2, NS3, NS4A, NS4B, NS5A and the RNA-directed RNA polymerase embedded in an ER-derived membranous web. Part of the viral assembly initiation complex composed of NS2, E1, E2, NS3, NS4A, NS5A and the mature core protein. In terms of assembly, homomultimer. Interacts with non-structural protein NS5A. Interacts with host PLA2G4C; this interaction likely initiates the recruitment of replication complexes to lipid droplets. Interacts with host STING; this interaction disrupts the interaction between STING and TBK1 thereby suppressing the interferon signaling. Interacts with host METTL22; this interaction may promote the recruitment of NS4B in the proximity of lipid droplet. Part of the replication complex composed of NS2, NS3, NS4A, NS4B, NS5A and the RNA-directed RNA polymerase embedded in an ER-derived membranous web. Monomer. Homodimer; dimerization is required for RNA-binding. Interacts with the mature core protein. Interacts (via N-terminus) with non-structural protein 4A. Interacts with non-structural protein 4B. Interacts (via region D2) with RNA-directed RNA polymerase. Part of the viral assembly initiation complex composed of NS2, E1, E2, NS3, NS4A, NS5A and the mature core protein. Part of the replication complex composed of NS2, NS3, NS4A, NS4B, NS5A and the RNA-directed RNA polymerase embedded in an ER-derived membranous web. Interacts with host GRB2. Interacts with host BIN1. Interacts with host PIK3R1. Interacts with host SRCAP. Interacts with host FKBP8. Interacts (via C-terminus) with host VAPB (via MSP domain). Interacts with host EIF2AK2/PKR; this interaction leads to disruption of EIF2AK2 dimerization by NS5A and probably allows the virus to evade the innate immune response. Interacts (via N-terminus) with host PACSIN2 (via N-terminus); this interaction attenuates protein kinase C alpha-mediated phosphorylation of PACSIN2 by disrupting the interaction between PACSIN2 and PRKCA. Interacts (via N-terminus) with host SRC kinase (via SH2 domain). Interacts with most Src-family kinases. Interacts with host IFI27 and SKP2; promotes the ubiquitin-mediated proteasomal degradation of NS5A. Interacts with host GPS2. Interacts with host TNFRSF21; this interaction allows the modulation by the virus of JNK, p38 MAPK, STAT3, and Akt signaling pathways in a DR6-dependent manner. Interacts (via N-terminus) with host CIDEB (via N-terminus); this interaction seems to regulate the association of HCV particles with APOE. Interacts with host CHKA/Choline Kinase-alpha; CHKA bridges host PI4KA and NS5A and potentiates NS5A-stimulated PI4KA activity, which then facilitates the targeting of the ternary complex to the ER for viral replication. Interacts with host SPSB2 (via C-terminus); this interaction targets NS5A for ubiquitination and degradation. Interacts with host RAB18; this interaction may promote the association of NS5A and other replicase components with lipid droplets. Interacts (via region D2) with host PPIA/CYPA; the interaction stimulates RNA-binding ability of NS5A and is dependent on the peptidyl-prolyl cis-trans isomerase activity of PPIA/CYPA. Interacts with host TRIM14; this interaction induces the degradation of NS5A. As to quaternary structure, homooligomer. Interacts with non-structural protein 5A. Interacts with host VAPB. Interacts with host PRK2/PKN2. Interacts with host HNRNPA1 and SEPT6; these interactions facilitate the viral replication. Part of the replication complex composed of NS2, NS3, NS4A, NS4B, NS5A and the RNA-directed RNA polymerase embedded in an ER-derived membranous web. Zn(2+) is required as a cofactor. It depends on Mg(2+) as a cofactor. Specific enzymatic cleavages in vivo yield mature proteins. The structural proteins, core, E1, E2 and p7 are produced by proteolytic processing by host signal peptidases. The core protein precursor is synthesized as a 23 kDa, which is retained in the ER membrane through the hydrophobic signal peptide. Cleavage by the signal peptidase releases the 21 kDa mature core protein. The cleavage of the core protein precursor occurs between aminoacids 176 and 188 but the exact cleavage site is not known. Some degraded forms of the core protein appear as well during the course of infection. The other proteins (p7, NS2, NS3, NS4A, NS4B, NS5A and NS5B) are cleaved by the viral proteases. Autoprocessing between NS2 and NS3 is mediated by the NS2 cysteine protease catalytic domain and regulated by the NS3 N-terminal domain. Post-translationally, phosphorylated by host PKC and PKA. In terms of processing, ubiquitinated; mediated by UBE3A and leading to core protein subsequent proteasomal degradation. Highly N-glycosylated. Post-translationally, palmitoylation is required for NS2/3 autoprocessing and E2 recruitment to membranes. In terms of processing, palmitoylated. This modification may play a role in its polymerization or in protein-protein interactions. Cleaved by host caspases which are probably activated by the viral infection. Post-translationally, ubiquitinated. Ubiquitination, most probably at Lys-2350, mediated by host IFI27 and SKP2 leads to proteasomal degradation, restricting viral infection. Ubiquitination by host TRIM22 leads to interruption of viral replication. In terms of processing, phosphorylated on serines in a basal form termed p56. p58 is a hyperphosphorylated form of p56. p56 and p58 coexist in the cell in roughly equivalent amounts. Hyperphosphorylation is dependent on the presence of NS4A. Host CSNK1A1/CKI-alpha, PI4KA or RPS6KB1 kinases may be responsible for NS5A phosphorylation. Phosphorylated NS5A is involved in viral replication. Tyrosine phosphorylation is essential for the interaction with host SRC. Post-translationally, the N-terminus is phosphorylated by host PRK2/PKN2.

It is found in the host endoplasmic reticulum membrane. It localises to the host mitochondrion membrane. Its subcellular location is the virion. The protein resides in the host cytoplasm. The protein localises to the host nucleus. It is found in the host lipid droplet. It localises to the virion membrane. Its subcellular location is the host mitochondrion. The protein resides in the host cell membrane. The protein localises to the host perinuclear region. It carries out the reaction Hydrolysis of four peptide bonds in the viral precursor polyprotein, commonly with Asp or Glu in the P6 position, Cys or Thr in P1 and Ser or Ala in P1'.. The catalysed reaction is a ribonucleoside 5'-triphosphate + H2O = a ribonucleoside 5'-diphosphate + phosphate + H(+). It catalyses the reaction ATP + H2O = ADP + phosphate + H(+). The enzyme catalyses RNA(n) + a ribonucleoside 5'-triphosphate = RNA(n+1) + diphosphate. With respect to regulation, inhibited by the antiviral drug hexamethylene amiloride. Inhibited by amantadine. Inhibition by amantadine appears to be genotype-dependent. Also inhibited by long-alkyl-chain iminosugar derivatives. Its activity is regulated as follows. Activity is up-regulated by PRK2/PKN2-mediated phosphorylation. In terms of biological role, packages viral RNA to form a viral nucleocapsid, and promotes virion budding. Participates in the viral particle production as a result of its interaction with the non-structural protein 5A. Binds RNA and may function as a RNA chaperone to induce the RNA structural rearrangements taking place during virus replication. Modulates viral translation initiation by interacting with viral IRES and 40S ribosomal subunit. Affects various cell signaling pathways, host immunity and lipid metabolism. Prevents the establishment of cellular antiviral state by blocking the interferon-alpha/beta (IFN-alpha/beta) and IFN-gamma signaling pathways and by blocking the formation of phosphorylated STAT1 and promoting ubiquitin-mediated proteasome-dependent degradation of STAT1. Activates STAT3 leading to cellular transformation. Regulates the activity of cellular genes, including c-myc and c-fos. May repress the promoter of p53, and sequester CREB3 and SP110 isoform 3/Sp110b in the cytoplasm. Represses cell cycle negative regulating factor CDKN1A, thereby interrupting an important check point of normal cell cycle regulation. Targets transcription factors involved in the regulation of inflammatory responses and in the immune response: suppresses NF-kappa-B activation, and activates AP-1. Binds to dendritic cells (DCs) via C1QR1, resulting in down-regulation of T-lymphocytes proliferation. Alters lipid metabolism by interacting with hepatocellular proteins involved in lipid accumulation and storage. Induces up-regulation of FAS promoter activity, and thereby contributes to the increased triglyceride accumulation in hepatocytes (steatosis). Forms a heterodimer with envelope glycoprotein E2, which mediates virus attachment to the host cell, virion internalization through clathrin-dependent endocytosis and fusion with host membrane. Fusion with the host cell is most likely mediated by both E1 and E2, through conformational rearrangements of the heterodimer required for fusion rather than a classical class II fusion mechanism. E1/E2 heterodimer binds host apolipoproteins such as APOB and APOE thereby forming a lipo-viro-particle (LVP). APOE associated to the LVP allows the initial virus attachment to cell surface receptors such as the heparan sulfate proteoglycans (HSPGs), syndecan-1 (SDC1), syndecan-1 (SDC2), the low-density lipoprotein receptor (LDLR) and scavenger receptor class B type I (SCARB1). The cholesterol transfer activity of SCARB1 allows E2 exposure and binding of E2 to SCARB1 and the tetraspanin CD81. E1/E2 heterodimer binding on CD81 activates the epithelial growth factor receptor (EGFR) signaling pathway. Diffusion of the complex E1/E2-EGFR-SCARB1-CD81 to the cell lateral membrane allows further interaction with Claudin 1 (CLDN1) and occludin (OCLN) to finally trigger HCV entry. Its function is as follows. Forms a heterodimer with envelope glycoprotein E1, which mediates virus attachment to the host cell, virion internalization through clathrin-dependent endocytosis and fusion with host membrane. Fusion with the host cell is most likely mediated by both E1 and E2, through conformational rearrangements of the heterodimer required for fusion rather than a classical class II fusion mechanism. The interaction between E2 and host apolipoprotein E/APOE allows the proper assembly, maturation and infectivity of the viral particles. This interaction is probably promoted via the up-regulation of cellular autophagy by the virus. E1/E2 heterodimer binds host apolipoproteins such as APOB and APOE thereby forming a lipo-viro-particle (LVP). APOE associated to the LVP allows the initial virus attachment to cell surface receptors such as the heparan sulfate proteoglycans (HSPGs), syndecan-1 (SDC1), syndecan-1 (SDC2), the low-density lipoprotein receptor (LDLR) and scavenger receptor class B type I (SCARB1). The cholesterol transfer activity of SCARB1 allows E2 exposure and binding of E2 to SCARB1 and the tetraspanin CD81. E1/E2 heterodimer binding on CD81 activates the epithelial growth factor receptor (EGFR) signaling pathway. Diffusion of the complex E1/E2-EGFR-SCARB1-CD81 to the cell lateral membrane allows further interaction with Claudin 1 (CLDN1) and occludin (OCLN) to finally trigger HCV entry. Inhibits host EIF2AK2/PKR activation, preventing the establishment of an antiviral state. Viral ligand for CD209/DC-SIGN and CLEC4M/DC-SIGNR, which are respectively found on DCs, and on liver sinusoidal endothelial cells and macrophage-like cells of lymph node sinuses. These interactions allow the capture of circulating HCV particles by these cells and subsequent facilitated transmission to permissive cells such as hepatocytes and lymphocyte subpopulations. The interaction between E2 and host amino acid transporter complex formed by SLC3A2 and SLC7A5/LAT1 may facilitate viral entry into host cell. Functionally, ion channel protein that acts as a viroporin and plays an essential role in the assembly, envelopment and secretion of viral particles. Participates in virus envelopment by coordinating the encounter between NS5A and NS2-based assembly sites loaded with E1/E2 heterodimer, which subsequently leads to nucleocapsid envelopment. Creates a pore in acidic organelles and releases Ca(2+) and H(+) in the cytoplasm of infected cells, leading to a productive viral infection. High levels of cytoplasmic Ca(2+) may trigger membrane trafficking and transport of viral ER-associated proteins to viroplasms, sites of viral genome replication. The release of Ca(2+) may also activate the inflamasome leading to chronic inflammation. Targets also host mitochondria and induces mitochondrial depolarization. In addition of its role as a viroporin, acts as a lipid raft adhesion factor. In terms of biological role, cysteine protease required for the proteolytic auto-cleavage between the non-structural proteins NS2 and NS3. The N-terminus of NS3 is required for the function of NS2 protease (active region NS2-3). Promotes the initiation of viral particle assembly by mediating the interaction between structural and non-structural proteins. Displays three enzymatic activities: serine protease with a chymotrypsin-like fold, NTPase and RNA helicase. NS3 serine protease, in association with NS4A, is responsible for the cleavages of NS3-NS4A, NS4A-NS4B, NS4B-NS5A and NS5A-NS5B. The NS3/NS4A complex prevents phosphorylation of host IRF3, thus preventing the establishment of dsRNA induced antiviral state. The NS3/NS4A complex induces host amino acid transporter component SLC3A2, thus contributing to HCV propagation. NS3 RNA helicase binds to RNA and unwinds both dsDNA and dsRNA in the 3' to 5' direction, and likely resolves RNA complicated stable secondary structures in the template strand. Binds a single ATP and catalyzes the unzipping of a single base pair of dsRNA. Inhibits host antiviral proteins TBK1 and IRF3 thereby preventing the establishment of an antiviral state. Cleaves host MAVS/CARDIF thereby preventing the establishment of an antiviral state. Cleaves host TICAM1/TRIF, thereby disrupting TLR3 signaling and preventing the establishment of an antiviral state. Its function is as follows. Peptide cofactor which forms a non-covalent complex with the N-terminal of NS3 serine protease. The NS3/NS4A complex prevents phosphorylation of host IRF3, thus preventing the establishment of dsRNA induced antiviral state. The NS3/NS4A complex induces host amino acid transporter component SLC3A2, thus contributing to HCV propagation. Functionally, induces a specific membrane alteration that serves as a scaffold for the virus replication complex. This membrane alteration gives rise to the so-called ER-derived membranous web that contains the replication complex. NS4B self-interaction contributes to its function in membranous web formation. Promotes host TRIF protein degradation in a CASP8-dependent manner thereby inhibiting host TLR3-mediated interferon signaling. Disrupts the interaction between STING and TBK1 contributing to the inhibition of interferon signaling. In terms of biological role, phosphorylated protein that is indispensable for viral replication and assembly. Both hypo- and hyperphosphorylated states are required for the viral life cycle. The hyperphosphorylated form of NS5A is an inhibitor of viral replication. Involved in RNA-binding and especially in binding to the viral genome. Zinc is essential for RNA-binding. Participates in the viral particle production as a result of its interaction with the viral mature core protein. Its interaction with host VAPB may target the viral replication complex to vesicles. Down-regulates viral IRES translation initiation. Mediates interferon resistance, presumably by interacting with and inhibiting host EIF2AK2/PKR. Prevents BIN1-induced apoptosis. Acts as a transcriptional activator of some host genes important for viral replication when localized in the nucleus. Via the interaction with host PACSIN2, modulates lipid droplet formation in order to promote virion assembly. Modulates TNFRSF21/DR6 signaling pathway for viral propagation. RNA-dependent RNA polymerase that performs primer-template recognition and RNA synthesis during viral replication. Initiates RNA transcription/replication at a flavin adenine dinucleotide (FAD), resulting in a 5'- FAD cap on viral RNAs. In this way, recognition of viral 5' RNA by host pattern recognition receptors can be bypassed, thereby evading activation of antiviral pathways. In Homo sapiens (Human), this protein is Genome polyprotein.